Here is a 66-residue protein sequence, read N- to C-terminus: Large ribosomal subunit protein uL29 (66 aa).

The protein belongs to the universal ribosomal protein uL29 family.

The chain is Large ribosomal subunit protein uL29 from Thermosipho africanus (strain TCF52B).